The chain runs to 300 residues: PAK4-inhibitor INKA2 (300 aa).

Disordered regions lie at residues 59 to 104 (GGTP…SSPK), 178 to 201 (LEKG…GQSR), and 230 to 288 (KEKP…LEPS). Residues 60–73 (GTPTFSCPESSQEQ) are compositionally biased toward polar residues. Over residues 93–102 (SSSQPSFDSS) the composition is skewed to low complexity. Positions 140-183 (EPDDWTSTLMSRGRNRQPLVLGDNVFADLVGNWLDLPELEKGGE) are inka box. A compositionally biased stretch (basic residues) spans 246–256 (GRSKKVKKRSL).

Belongs to the INKA family. Interacts with PAK4. As to expression, enriched in the nervous system.

Its subcellular location is the nucleus. In terms of biological role, inhibitor of the serine/threonine-protein kinase PAK4. Acts by binding PAK4 in a substrate-like manner, inhibiting the protein kinase activity. The protein is PAK4-inhibitor INKA2 of Mus musculus (Mouse).